A 617-amino-acid polypeptide reads, in one-letter code: DNA mismatch repair protein MutL (617 aa).

The tract at residues 363-394 (YAPAYGARPPQPSAWSVDTSPHRPLDDGQNRF) is disordered. The span at 382–392 (SPHRPLDDGQN) shows a compositional bias: basic and acidic residues.

The protein belongs to the DNA mismatch repair MutL/HexB family.

In terms of biological role, this protein is involved in the repair of mismatches in DNA. It is required for dam-dependent methyl-directed DNA mismatch repair. May act as a 'molecular matchmaker', a protein that promotes the formation of a stable complex between two or more DNA-binding proteins in an ATP-dependent manner without itself being part of a final effector complex. The sequence is that of DNA mismatch repair protein MutL from Allorhizobium ampelinum (strain ATCC BAA-846 / DSM 112012 / S4) (Agrobacterium vitis (strain S4)).